Consider the following 49-residue polypeptide: uncharacterized protein (49 aa).

Residues 5–25 (LTTIFSVVIVLAIFLYFGLLI) form a helical membrane-spanning segment.

Belongs to the plectrovirus ORF12 protein family.

It localises to the host membrane. This is an uncharacterized protein from Spiroplasma virus SpV1-R8A2 B (SpV1).